Here is a 324-residue protein sequence, read N- to C-terminus: Probable UDP-sugar transporter protein SLC35A4 (324 aa).

The Cytoplasmic segment spans residues 1-18; it reads MSVEDGGVPGLARPRQAR. A helical membrane pass occupies residues 19 to 39; sequence WTLLLFLSTAMYGAHAPFLAL. The Lumenal portion of the chain corresponds to 40–52; it reads CHVDGRVPFRPSS. Residues 53–73 traverse the membrane as a helical segment; the sequence is AVLLTELTKLLLCAFSLLVGW. Topologically, residues 74-85 are cytoplasmic; sequence QTWPQGTPPWRQ. Residues 86–106 traverse the membrane as a helical segment; it reads AVPFALSALLYGANNNLVIYL. The Lumenal segment spans residues 107-142; that stretch reads QRYMDPSTYQVLSNLKIGSTALLYCLCLGHRLSARQ. Residues 143-163 traverse the membrane as a helical segment; sequence GLALLLLMAAGACYASGGFQE. Residues 164-180 lie on the Cytoplasmic side of the membrane; that stretch reads PVNTLPGPASAAGAHPM. Residues 181-201 form a helical membrane-spanning segment; that stretch reads PLHITPLGLLLLILYCLISGL. Over 202–214 the chain is Lumenal; the sequence is SSVYTELIMKRQR. Residues 215 to 235 traverse the membrane as a helical segment; it reads LPLALQNLFLYTFGVILNFGL. At 236–248 the chain is on the cytoplasmic side; that stretch reads YAGSGPGPGFLEG. A helical membrane pass occupies residues 249-271; that stretch reads FSGWAVLVVLNQAVNGLLMSAVM. Over 272 to 279 the chain is Lumenal; that stretch reads KHGSSITR. The chain crosses the membrane as a helical span at residues 280 to 300; that stretch reads LFIVSCSLVVNAVLSAVLLQL. At 301–324 the chain is on the cytoplasmic side; the sequence is QLTAIFFLAALLIGLAVCLYYGSP.

It belongs to the nucleotide-sugar transporter family. SLC35A subfamily. As to quaternary structure, found in a complex with SLC35A2 and SLC35A3.

The protein resides in the golgi apparatus membrane. The enzyme catalyses CDP-L-ribitol(in) + CDP(out) = CDP-L-ribitol(out) + CDP(in). Its function is as follows. Mediates the transport of CDP-ribitol. Does not exhibit CMP-sialic acid, UDP-galactose and UDP-N-acetylglucosamine transport activity. This chain is Probable UDP-sugar transporter protein SLC35A4, found in Mus musculus (Mouse).